The chain runs to 294 residues: Nucleotide-binding protein Tfu_2020 (294 aa).

Residue 18-25 coordinates ATP; it reads GMSGAGRS. 69–72 contacts GTP; that stretch reads DVRS.

The protein belongs to the RapZ-like family.

Functionally, displays ATPase and GTPase activities. The polypeptide is Nucleotide-binding protein Tfu_2020 (Thermobifida fusca (strain YX)).